Consider the following 632-residue polypeptide: Extracellular metalloproteinase 5 (632 aa).

A signal peptide spans 1–20 (MHGLLLAAGLLSLPLHVLAH). Positions 21–244 (PQPGTSLAGR…HNVVDYVSHA (224 aa)) are excised as a propeptide. Residue asparagine 284 is glycosylated (N-linked (GlcNAc...) asparagine). A Zn(2+)-binding site is contributed by histidine 427. Glutamate 428 is an active-site residue. A Zn(2+)-binding site is contributed by histidine 431. Asparagine 591 and asparagine 620 each carry an N-linked (GlcNAc...) asparagine glycan.

The protein belongs to the peptidase M36 family. Zn(2+) serves as cofactor.

The protein localises to the secreted. In terms of biological role, secreted metalloproteinase probably acting as a virulence factor. The protein is Extracellular metalloproteinase 5 (MEP5) of Arthroderma otae (strain ATCC MYA-4605 / CBS 113480) (Microsporum canis).